The following is a 615-amino-acid chain: Protein DlpA (615 aa).

The protein belongs to the isocitrate and isopropylmalate dehydrogenases family. This sequence to M.jannaschii MJ0644 in the C-terminal section.

The sequence is that of Protein DlpA (dlpA) from Legionella pneumophila subsp. pneumophila (strain Philadelphia 1 / ATCC 33152 / DSM 7513).